We begin with the raw amino-acid sequence, 96 residues long: UPF0235 protein Sputcn32_2690 (96 aa).

Belongs to the UPF0235 family.

The protein is UPF0235 protein Sputcn32_2690 of Shewanella putrefaciens (strain CN-32 / ATCC BAA-453).